The chain runs to 120 residues: Large ribosomal subunit protein uL24 (120 aa).

Positions 1–26 (MVRVISSQPRKQRKARYNAPHHMRGS) are disordered. Residues 10 to 24 (RKQRKARYNAPHHMR) are compositionally biased toward basic residues.

It belongs to the universal ribosomal protein uL24 family. As to quaternary structure, part of the 50S ribosomal subunit.

One of two assembly initiator proteins, it binds directly to the 5'-end of the 23S rRNA, where it nucleates assembly of the 50S subunit. In terms of biological role, located at the polypeptide exit tunnel on the outside of the subunit. This is Large ribosomal subunit protein uL24 from Methanospirillum hungatei JF-1 (strain ATCC 27890 / DSM 864 / NBRC 100397 / JF-1).